The primary structure comprises 239 residues: Probable transcriptional regulatory protein ABO_1803 (239 aa).

This sequence belongs to the TACO1 family.

It localises to the cytoplasm. In Alcanivorax borkumensis (strain ATCC 700651 / DSM 11573 / NCIMB 13689 / SK2), this protein is Probable transcriptional regulatory protein ABO_1803.